We begin with the raw amino-acid sequence, 246 residues long: MKYDIIGDIHGCLQEFQNLTEKLGYNWSSGLPVHPDQRKLAFVGDITDRGPHSLRMIEIVWELVIHKKVAYYAPGNHCNKLYRFFLGRNVTIAHGLETTVAEYEALPSHKQNMIKEKFITLYEQSPLYHILDEKRLLVCHAGIRQDYIGRQDKKVQTFVLYGDITGEKHADGSPVRRDWAKEYKGTTWIVYGHTPVKEPRFVNHTVNIDTGAVFGGRLTALRYPEMETVSVPSSLPFVPEKFRPIS.

This sequence belongs to the PrpE family. Requires Ni(2+) as cofactor.

It catalyses the reaction P(1),P(4)-bis(5'-guanosyl) tetraphosphate + H2O = GMP + GTP + 2 H(+). Functionally, asymmetrically hydrolyzes Ap4p to yield AMP and ATP. The protein is Bis(5'-nucleosyl)-tetraphosphatase PrpE [asymmetrical] of Bacillus anthracis (strain A0248).